Reading from the N-terminus, the 919-residue chain is Calcium-transporting ATPase type 2C member 1 (919 aa).

Topologically, residues 1–70 (MKVARFQKIP…NEFDISEDEP (70 aa)) are cytoplasmic. Residues 71–91 (LWKKYISQFKNPLIMLLLASA) traverse the membrane as a helical segment. The Lumenal segment spans residues 92 to 104 (VISVLMHQFDDAV). The chain crosses the membrane as a helical span at residues 105–123 (SITVAILIVVTVAFVQEYR). At 124–262 (SEKSLEELSK…APKTPLQKSM (139 aa)) the chain is on the cytoplasmic side. Residues 263-282 (DLLGKQLSFYSFGIIGIIML) form a helical membrane-spanning segment. The Lumenal segment spans residues 283–294 (VGWLLGKDILEM). Residues 295–312 (FTISVSLAVAAIPEGLPI) traverse the membrane as a helical segment. Residues V303, A304, I306, and E308 each coordinate Ca(2+). At 313–699 (VVTVTLALGV…EEGKGIYNNI (387 aa)) the chain is on the cytoplasmic side. The active-site 4-aspartylphosphate intermediate is D350. Residues D644 and D648 each contribute to the Mg(2+) site. The helical transmembrane segment at 700–719 (KNFVRFQLSTSIAALTLISL) threads the bilayer. Over 720-729 (ATLMNFPNPL) the chain is Lumenal. Residues 730–750 (NAMQILWINIIMDGPPAQSLG) form a helical membrane-spanning segment. Ca(2+) is bound by residues N738 and D742. The Cytoplasmic segment spans residues 751-770 (VEPVDKDVIRKPPRNWKDSI). A helical transmembrane segment spans residues 771-793 (LTKNLILKILVSSIIIVCGTLFV). Over 794–808 (FWRELRDNVITPRDT) the chain is Lumenal. Residues 809–828 (TMTFTCFVFFDMFNALSSRS) traverse the membrane as a helical segment. The Cytoplasmic portion of the chain corresponds to 829–841 (QTKSVFEIGLCSN). A helical transmembrane segment spans residues 842–860 (RMFCYAVLGSIMGQLLVIY). Over 861-875 (FPPLQKVFQTESLSI) the chain is Lumenal. Residues 876 to 896 (LDLLFLLGLTSSVCIVAEIIK) form a helical membrane-spanning segment. The Cytoplasmic segment spans residues 897-919 (KVERSREKIQKHVSSTSSSFLEV).

This sequence belongs to the cation transport ATPase (P-type) (TC 3.A.3) family. Type IIA subfamily. Monomer. Homodimer. Found in most tissues except colon, thymus, spleen and leukocytes. Expressed in keratinocytes (at protein level).

It is found in the golgi apparatus. Its subcellular location is the trans-Golgi network membrane. The protein localises to the golgi stack membrane. The catalysed reaction is Ca(2+)(in) + ATP + H2O = Ca(2+)(out) + ADP + phosphate + H(+). It catalyses the reaction Mn(2+)(in) + ATP + H2O = Mn(2+)(out) + ADP + phosphate + H(+). Its function is as follows. ATP-driven pump that supplies the Golgi apparatus with Ca(2+) and Mn(2+) ions, both essential cofactors for processing and trafficking of newly synthesized proteins in the secretory pathway. Within a catalytic cycle, acquires Ca(2+) or Mn(2+) ions on the cytoplasmic side of the membrane and delivers them to the lumenal side. The transfer of ions across the membrane is coupled to ATP hydrolysis and is associated with a transient phosphorylation that shifts the pump conformation from inward-facing to outward-facing state. Plays a primary role in the maintenance of Ca(2+) homeostasis in the trans-Golgi compartment with a functional impact on Golgi and post-Golgi protein sorting as well as a structural impact on cisternae morphology. Responsible for loading the Golgi stores with Ca(2+) ions in keratinocytes, contributing to keratinocyte differentiation and epidermis integrity. Participates in Ca(2+) and Mn(2+) ions uptake into the Golgi store of hippocampal neurons and regulates protein trafficking required for neural polarity. May also play a role in the maintenance of Ca(2+) and Mn(2+) homeostasis and signaling in the cytosol while preventing cytotoxicity. This chain is Calcium-transporting ATPase type 2C member 1, found in Homo sapiens (Human).